The primary structure comprises 189 residues: Crossover junction endodeoxyribonuclease RuvC (189 aa).

Catalysis depends on residues Asp-7, Glu-68, and Asp-141. 3 residues coordinate Mg(2+): Asp-7, Glu-68, and Asp-141.

The protein belongs to the RuvC family. Homodimer which binds Holliday junction (HJ) DNA. The HJ becomes 2-fold symmetrical on binding to RuvC with unstacked arms; it has a different conformation from HJ DNA in complex with RuvA. In the full resolvosome a probable DNA-RuvA(4)-RuvB(12)-RuvC(2) complex forms which resolves the HJ. Mg(2+) serves as cofactor.

The protein localises to the cytoplasm. The catalysed reaction is Endonucleolytic cleavage at a junction such as a reciprocal single-stranded crossover between two homologous DNA duplexes (Holliday junction).. In terms of biological role, the RuvA-RuvB-RuvC complex processes Holliday junction (HJ) DNA during genetic recombination and DNA repair. Endonuclease that resolves HJ intermediates. Cleaves cruciform DNA by making single-stranded nicks across the HJ at symmetrical positions within the homologous arms, yielding a 5'-phosphate and a 3'-hydroxyl group; requires a central core of homology in the junction. The consensus cleavage sequence is 5'-(A/T)TT(C/G)-3'. Cleavage occurs on the 3'-side of the TT dinucleotide at the point of strand exchange. HJ branch migration catalyzed by RuvA-RuvB allows RuvC to scan DNA until it finds its consensus sequence, where it cleaves and resolves the cruciform DNA. The protein is Crossover junction endodeoxyribonuclease RuvC of Rhodococcus opacus (strain B4).